Consider the following 144-residue polypeptide: Large ribosomal subunit protein uL16 (144 aa).

Belongs to the universal ribosomal protein uL16 family. As to quaternary structure, part of the 50S ribosomal subunit.

Functionally, binds 23S rRNA and is also seen to make contacts with the A and possibly P site tRNAs. The chain is Large ribosomal subunit protein uL16 from Heliobacterium modesticaldum (strain ATCC 51547 / Ice1).